Consider the following 1943-residue polypeptide: Trichohyalin (1943 aa).

Residues 1-91 (MSPLLRSICD…AQACYYALGQ (91 aa)) are S-100-like. 2 consecutive EF-hand domains span residues 23 to 48 (CDGA…LRRP) and 49 to 84 (HDPK…VAQA). Ca(2+) is bound by residues Asp-32, Asp-62, Asp-64, Asn-66, Arg-68, and Glu-73. 3 disordered regions span residues 110-164 (LQDR…LEQR), 186-209 (RRAE…DEEQ), and 222-274 (GREE…LQEE). The span at 197-209 (KGHETEEFPDEEQ) shows a compositional bias: basic and acidic residues. The stretch at 314–326 (RREQQEERREQQE) is one 1-1; approximate repeat. The segment at 314 to 377 (RREQQEERRE…QEEERREQQL (64 aa)) is 5 X 13 AA tandem repeats of R-R-E-Q-E-E-E-R-R-E-Q-Q-L. A 1-2; approximate repeat occupies 327 to 339 (RREQQEERREQQL). The 1-3; approximate repeat unit spans residues 340 to 351 (RREQEERREQQL). Repeat copies occupy residues 352–364 (RREQ…EQQL), 365–377 (RREQ…EQQL), 378–383 (RREQQL), 384–389 (RREQQL), 390–395 (RREQQL), 396–401 (RREQQL), 402–407 (RREQQL), 408–413 (RREQQL), 414–419 (RREQQL), and 420–425 (RREQQL). An 8 X 6 AA tandem repeats of R-R-E-Q-Q-L region spans residues 378-425 (RREQQLRREQQLRREQQLRREQQLRREQQLRREQQLRREQQLRREQQL). Positions 425-683 (LRREQEEERH…REHEEERREQ (259 aa)) are 9 X 28 AA approximate tandem repeats. Disordered regions lie at residues 426 to 485 (RREQ…EERR), 509 to 546 (REQE…EERR), 608 to 819 (ERLE…EKEQ), and 837 to 872 (EEQL…RRDQ). Composition is skewed to basic and acidic residues over residues 608–684 (ERLE…REQE), 724–781 (RKQE…ERGR), 789–812 (PLRE…RFLP), and 859–872 (DQER…RRDQ). Tandem repeats lie at residues 906–935 (LQEE…EEEQ), 936–965 (LQQE…KDKK), 966–995 (LQQK…EEEE), 996–1025 (LQQE…KKDE), 1026–1055 (LQQE…EEEE), 1056–1085 (LQQE…KEEE), 1086–1115 (LQQE…EEEE), 1116–1145 (LQQE…EEEE), 1146–1175 (VQQE…EEEE), and 1176–1204 (LQQE…EEEE). The 10 X 30 AA tandem repeats stretch occupies residues 906–1204 (LQEEEEELQR…RERQYREEEE (299 aa)). A compositionally biased stretch (basic and acidic residues) spans 950–992 (KRRRQERERQYRKDKKLQQKEEQLLGEEPEKRRRQEREKKYRE). 9 disordered regions span residues 950–1000 (KRRR…QQEE), 1046–1120 (RERQ…QQEE), 1137–1162 (ERQY…EKRR), 1193–1371 (QERE…RHQE), 1404–1435 (REQQ…FREE), 1492–1691 (QQLR…ERDR), 1757–1820 (PERE…RDGK), 1834–1864 (EQRL…EQEL), and 1876–1928 (RERK…VRSS). The segment covering 1052–1064 (EEEELQQEEEQLL) has biased composition (acidic residues). Basic and acidic residues-rich tracts occupy residues 1065-1085 (GEER…KEEE) and 1092-1111 (QLLR…RQCR). The segment covering 1142 to 1151 (EEEEVQQEEE) has biased composition (acidic residues). Positions 1152–1162 (QLLREEPEKRR) are enriched in basic and acidic residues. Basic and acidic residues-rich tracts occupy residues 1214-1263 (YRDE…DRQS) and 1274-1371 (QQER…RHQE). Residues 1292-1894 (HFPEEEQLER…IRRQQKEEQR (603 aa)) are 23 X 26 AA approximate tandem repeats. Composition is skewed to basic and acidic residues over residues 1492-1524 (QQLR…EQQL), 1533-1673 (FLQE…REEE), and 1682-1691 (QQLRRQERDR). Residues 1876-1912 (RERKLREEHIRRQQKEEQRHRQVGEIKSQEGKGHGRL) are compositionally biased toward basic and acidic residues.

It belongs to the S100-fused protein family. Monomer. Post-translationally, substrate of transglutaminase. Some 200 arginines are probably converted to citrullines by peptidylarginine deimidase. In terms of tissue distribution, found in the hard keratinizing tissues such as the inner root sheath (IRS) of hair follicles and medulla, and in the filiform papillae of dorsal tongue epithelium.

Functionally, intermediate filament-associated protein that associates in regular arrays with keratin intermediate filaments (KIF) of the inner root sheath cells of the hair follicle and the granular layer of the epidermis. It later becomes cross-linked to KIF by isodipeptide bonds. It may serve as scaffold protein, together with involucrin, in the organization of the cell envelope or even anchor the cell envelope to the KIF network. It may be involved in its own calcium-dependent postsynthetic processing during terminal differentiation. The chain is Trichohyalin (TCHH) from Homo sapiens (Human).